We begin with the raw amino-acid sequence, 357 residues long: Uroporphyrinogen decarboxylase (357 aa).

Substrate is bound by residues 30–34 (RQAGR), D79, Y154, S209, and H336.

The protein belongs to the uroporphyrinogen decarboxylase family. In terms of assembly, homodimer.

Its subcellular location is the cytoplasm. The catalysed reaction is uroporphyrinogen III + 4 H(+) = coproporphyrinogen III + 4 CO2. It participates in porphyrin-containing compound metabolism; protoporphyrin-IX biosynthesis; coproporphyrinogen-III from 5-aminolevulinate: step 4/4. Functionally, catalyzes the decarboxylation of four acetate groups of uroporphyrinogen-III to yield coproporphyrinogen-III. The polypeptide is Uroporphyrinogen decarboxylase (Mycobacterium leprae (strain Br4923)).